Reading from the N-terminus, the 306-residue chain is D-alanine--D-alanine ligase B (306 aa).

Catalysis depends on residues glutamate 15 and serine 150. The 203-residue stretch at lysine 101–glutamate 303 folds into the ATP-grasp domain. Isoleucine 134 to threonine 189 provides a ligand contact to ATP. Residues aspartate 257, glutamate 270, and asparagine 272 each contribute to the Mg(2+) site. The active site involves serine 281.

Belongs to the D-alanine--D-alanine ligase family. Monomer. Mg(2+) serves as cofactor. The cofactor is Mn(2+).

It localises to the cytoplasm. The enzyme catalyses 2 D-alanine + ATP = D-alanyl-D-alanine + ADP + phosphate + H(+). Its pathway is cell wall biogenesis; peptidoglycan biosynthesis. Cell wall formation. This chain is D-alanine--D-alanine ligase B (ddlB), found in Escherichia coli O157:H7.